The following is a 21-amino-acid chain: Ocellatin-4 (21 aa).

Isoleucine amide is present on I21.

Expressed by the skin dorsal glands.

The protein resides in the secreted. Functionally, has hemolytic activity against human erythrocytes (HC50=14.3 uM). Has antibacterial activity against the Gram-positive bacterium S.aureus ATCC 25923 (MIC=64 uM) and the Gram-negative bacterium E.coli ATCC 25922 (MIC=64 uM). This is Ocellatin-4 from Leptodactylus ocellatus (Argus frog).